Here is a 180-residue protein sequence, read N- to C-terminus: Large ribosomal subunit protein uL18m (180 aa).

It belongs to the universal ribosomal protein uL18 family. Component of the mitochondrial large ribosomal subunit (mt-LSU). Mature mammalian 55S mitochondrial ribosomes consist of a small (28S) and a large (39S) subunit. The 28S small subunit contains a 12S ribosomal RNA (12S mt-rRNA) and 30 different proteins. The 39S large subunit contains a 16S rRNA (16S mt-rRNA), a copy of mitochondrial valine transfer RNA (mt-tRNA(Val)), which plays an integral structural role, and 52 different proteins.

Its subcellular location is the mitochondrion. Together with thiosulfate sulfurtransferase (TST), acts as a mitochondrial import factor for the cytosolic 5S rRNA. The precursor form shows RNA chaperone activity; is able to fold the 5S rRNA into an import-competent conformation that is recognized by rhodanese (TST). Both the cytoplasmic and mitochondrial forms are able to bind to the helix IV-loop D in the gamma domain of the 5S rRNA. In Homo sapiens (Human), this protein is Large ribosomal subunit protein uL18m (MRPL18).